The following is a 530-amino-acid chain: Pentatricopeptide repeat-containing protein At5g56310 (530 aa).

PPR repeat units lie at residues 77 to 114, 115 to 149, 150 to 180, 181 to 211, 214 to 248, 249 to 283, 284 to 314, 315 to 349, 350 to 380, and 386 to 420; these read NTYLHNTMIRALSLLDEPNAHSIAITVYRKLWALCAKP, DTFTFPFVLKIAVRVSDVWFGRQIHGQVVVFGFDS, SVHVVTGLIQMYFSCGGLGDARKMFDEMLVK, DVNVWNALLAGYGKVGEMDEARSLLEMMPCW, NEVSWTCVISGYAKSGRASEAIEVFQRMLMENVEP, DEVTLLAVLSACADLGSLELGERICSYVDHRGMNR, AVSLNNAVIDMYAKSGNITKALDVFECVNER, NVVTWTTIIAGLATHGHGAEALAMFNRMVKAGVRP, NDVTFIAILSACSHVGWVDLGKRLFNSMRSK, and NIEHYGCMIDLLGRAGKLREADEVIKSMPFKANAA. Positions 421 to 496 are type E motif; that stretch reads IWGSLLAASN…MAGESSIEVE (76 aa). The interval 497–527 is type E(+) motif; sequence NRVYKFISGDLTHPQVERIHEILQEMDLQIQ.

It belongs to the PPR family. PCMP-E subfamily.

The protein is Pentatricopeptide repeat-containing protein At5g56310 (PCMP-E13) of Arabidopsis thaliana (Mouse-ear cress).